A 289-amino-acid polypeptide reads, in one-letter code: E3 ubiquitin-protein ligase MARCHF5 (289 aa).

The segment at valine 4–valine 73 adopts an RING-CH-type zinc-finger fold. Residues cysteine 12, cysteine 15, cysteine 31, cysteine 33, histidine 41, cysteine 44, cysteine 63, and cysteine 66 each contribute to the Zn(2+) site. The next 4 helical transmembrane spans lie at phenylalanine 97 to valine 117, proline 137 to isoleucine 157, leucine 202 to glycine 222, and threonine 236 to glutamine 256.

The protein localises to the mitochondrion outer membrane. It localises to the endoplasmic reticulum membrane. The enzyme catalyses S-ubiquitinyl-[E2 ubiquitin-conjugating enzyme]-L-cysteine + [acceptor protein]-L-lysine = [E2 ubiquitin-conjugating enzyme]-L-cysteine + N(6)-ubiquitinyl-[acceptor protein]-L-lysine.. It functions in the pathway protein modification; protein ubiquitination. In terms of biological role, mitochondrial E3 ubiquitin-protein ligase that plays a crucial role in the control of mitochondrial morphology by acting as a positive regulator of mitochondrial fission. May play a role in the prevention of cell senescence acting as a regulator of mitochondrial quality control. The polypeptide is E3 ubiquitin-protein ligase MARCHF5 (marchf5) (Danio rerio (Zebrafish)).